The sequence spans 358 residues: Purine permease 2 (358 aa).

10 helical membrane-spanning segments follow: residues 6-26 (VLVI…PLMM), 37-57 (IWFP…PLLL), 74-94 (FFLM…LVGF), 110-130 (TASL…FFMV), 134-154 (FTPF…VLAL), 170-190 (VVGF…LPLV), 209-229 (FQMV…LAAG), 262-282 (VIVF…GLIF), 288-308 (VSGI…VICF), and 312-332 (FQAG…SYFY). An EamA domain is found at 46-154 (VGCPLIFFPL…LTGGAVVLAL (109 aa)).

The protein belongs to the purine permeases (TC 2.A.7.14) family. In terms of tissue distribution, expressed in the vascular system of leaves. Restricted to the phloem. Expressed in flowers and roots and not detected in stems.

The protein localises to the membrane. With respect to regulation, competitive inhibition of adenine transport by isopentenyladenine, kinetin, benzylaminopurine, trans- and cis-zeatin and trans-zeatin riboside. Mediates adenine transport. May be involved in the uptake of cytokinin analogs. This Arabidopsis thaliana (Mouse-ear cress) protein is Purine permease 2 (PUP2).